A 317-amino-acid polypeptide reads, in one-letter code: Putative GTPase PH0274 (317 aa).

Residues 54-62, Asp196, and 231-233 contribute to the GTP site; these read GPPGAGKST and VGT.

The protein belongs to the SIMIBI class G3E GTPase family. ArgK/MeaB subfamily.

May have GTPase activity. May also bind and hydrolyze ATP. May function as chaperone. This Pyrococcus horikoshii (strain ATCC 700860 / DSM 12428 / JCM 9974 / NBRC 100139 / OT-3) protein is Putative GTPase PH0274.